A 458-amino-acid polypeptide reads, in one-letter code: ATP synthase subunit beta (458 aa).

148-155 (GGAGVGKT) is a binding site for ATP.

This sequence belongs to the ATPase alpha/beta chains family. F-type ATPases have 2 components, CF(1) - the catalytic core - and CF(0) - the membrane proton channel. CF(1) has five subunits: alpha(3), beta(3), gamma(1), delta(1), epsilon(1). CF(0) has three main subunits: a(1), b(2) and c(9-12). The alpha and beta chains form an alternating ring which encloses part of the gamma chain. CF(1) is attached to CF(0) by a central stalk formed by the gamma and epsilon chains, while a peripheral stalk is formed by the delta and b chains.

It localises to the cell inner membrane. It carries out the reaction ATP + H2O + 4 H(+)(in) = ADP + phosphate + 5 H(+)(out). Produces ATP from ADP in the presence of a proton gradient across the membrane. The catalytic sites are hosted primarily by the beta subunits. The protein is ATP synthase subunit beta of Pseudomonas entomophila (strain L48).